A 336-amino-acid chain; its full sequence is Oxaloacetate decarboxylase (336 aa).

A Pyruvate carboxyltransferase domain is found at 10–258 (PIVLDTTVRD…LAAVDLDRIF (249 aa)). Mn(2+)-binding residues include aspartate 19, histidine 197, and histidine 199.

Belongs to the 4-hydroxy-2-oxovalerate aldolase family. Homodimer. Requires a divalent metal cation as cofactor.

It catalyses the reaction oxaloacetate + H(+) = pyruvate + CO2. Its activity is regulated as follows. Activity is abolished upon incubation with Chelex and EDTA. In terms of biological role, exhibits oxaloacetate decarboxylase activity. Lacks any detectable aldolase activity with 4-hydroxy-2-oxopentanoate (HOPA), 4-hydroxy-2-oxohexanoate (HOHA) or other 4-hydroxy-2-oxoacids. This Mycobacterium tuberculosis (strain ATCC 25618 / H37Rv) protein is Oxaloacetate decarboxylase.